Consider the following 291-residue polypeptide: MAGSLSEIKGKIISTQKTSHITGAMQMVSAAKLTKSEQAAKDFQVYASKIRQITTDLLKSELVNGSKNPMLAARPVKKTGYIVITSDKGLVGGYNSKILKAMMDLIEEYHQDGNYAIIAIGGIGADFFKARGMNVVFELRGLEDQPSFEQVGNIIAKSVEMYKNELFDELYVCYNHHVNSLTSQVRVQQMLPIAELDADEAAEEGVSGFELEPNREMILEQLLPQYTESLIYGAIVDAKTAEHAAGMTAMQTATDNAKNVINDLTIQYNRARQAAITQEITEIVAGANALE.

Belongs to the ATPase gamma chain family. F-type ATPases have 2 components, CF(1) - the catalytic core - and CF(0) - the membrane proton channel. CF(1) has five subunits: alpha(3), beta(3), gamma(1), delta(1), epsilon(1). CF(0) has three main subunits: a, b and c.

It is found in the cell membrane. Functionally, produces ATP from ADP in the presence of a proton gradient across the membrane. The gamma chain is believed to be important in regulating ATPase activity and the flow of protons through the CF(0) complex. This Streptococcus equinus (Streptococcus bovis) protein is ATP synthase gamma chain.